The chain runs to 339 residues: Protein-glutamate methylesterase/protein-glutamine glutaminase (339 aa).

Positions 2-119 constitute a Response regulatory domain; sequence RIGVVNDMPM…EGNASSQSAR (118 aa). 4-aspartylphosphate is present on Asp-53. A CheB-type methylesterase domain is found at 149–338; sequence PTPRRLIAIG…SRIIEACERS (190 aa). Catalysis depends on residues Ser-160, His-187, and Asp-280.

Belongs to the CheB family. In terms of processing, phosphorylated by CheA. Phosphorylation of the N-terminal regulatory domain activates the methylesterase activity.

The protein resides in the cytoplasm. The catalysed reaction is [protein]-L-glutamate 5-O-methyl ester + H2O = L-glutamyl-[protein] + methanol + H(+). It carries out the reaction L-glutaminyl-[protein] + H2O = L-glutamyl-[protein] + NH4(+). Functionally, involved in chemotaxis. Part of a chemotaxis signal transduction system that modulates chemotaxis in response to various stimuli. Catalyzes the demethylation of specific methylglutamate residues introduced into the chemoreceptors (methyl-accepting chemotaxis proteins or MCP) by CheR. Also mediates the irreversible deamidation of specific glutamine residues to glutamic acid. The polypeptide is Protein-glutamate methylesterase/protein-glutamine glutaminase (Mesorhizobium japonicum (strain LMG 29417 / CECT 9101 / MAFF 303099) (Mesorhizobium loti (strain MAFF 303099))).